A 239-amino-acid polypeptide reads, in one-letter code: Pyridoxine 5'-phosphate synthase (239 aa).

N9 provides a ligand contact to 3-amino-2-oxopropyl phosphate. D11 to H12 contacts 1-deoxy-D-xylulose 5-phosphate. Residue R20 coordinates 3-amino-2-oxopropyl phosphate. The active-site Proton acceptor is H45. 1-deoxy-D-xylulose 5-phosphate is bound by residues R47 and H52. Residue E72 is the Proton acceptor of the active site. Residue T102 participates in 1-deoxy-D-xylulose 5-phosphate binding. H189 acts as the Proton donor in catalysis. Residues G190 and G211 to H212 contribute to the 3-amino-2-oxopropyl phosphate site.

This sequence belongs to the PNP synthase family. As to quaternary structure, homooctamer; tetramer of dimers.

It localises to the cytoplasm. The catalysed reaction is 3-amino-2-oxopropyl phosphate + 1-deoxy-D-xylulose 5-phosphate = pyridoxine 5'-phosphate + phosphate + 2 H2O + H(+). It functions in the pathway cofactor biosynthesis; pyridoxine 5'-phosphate biosynthesis; pyridoxine 5'-phosphate from D-erythrose 4-phosphate: step 5/5. Its function is as follows. Catalyzes the complicated ring closure reaction between the two acyclic compounds 1-deoxy-D-xylulose-5-phosphate (DXP) and 3-amino-2-oxopropyl phosphate (1-amino-acetone-3-phosphate or AAP) to form pyridoxine 5'-phosphate (PNP) and inorganic phosphate. In Ehrlichia chaffeensis (strain ATCC CRL-10679 / Arkansas), this protein is Pyridoxine 5'-phosphate synthase.